The primary structure comprises 127 residues: Fluoride-specific ion channel FluC 1 (127 aa).

3 helical membrane passes run 6–26 (PLVT…GSNL), 29–49 (FVGL…CGSF), and 95–115 (EWAV…VLVG).

The protein belongs to the fluoride channel Fluc/FEX (TC 1.A.43) family.

Its subcellular location is the cell membrane. The catalysed reaction is fluoride(in) = fluoride(out). Its function is as follows. Fluoride-specific ion channel. Important for reducing fluoride concentration in the cell, thus reducing its toxicity. This Haloarcula marismortui (strain ATCC 43049 / DSM 3752 / JCM 8966 / VKM B-1809) (Halobacterium marismortui) protein is Fluoride-specific ion channel FluC 1.